The primary structure comprises 412 residues: Multidrug resistance protein MdtA (412 aa).

A signal peptide spans 1–21 (MKGSNIRRWGAALAVVIIAGA). 2 disordered regions span residues 33-53 (GSGAPAAGQGPQGPGGARHGR) and 389-412 (VVTASSGEQAQPAPRQSGKHGARS).

The protein belongs to the membrane fusion protein (MFP) (TC 8.A.1) family. As to quaternary structure, part of a tripartite efflux system composed of MdtA, MdtB and MdtC.

The protein resides in the cell inner membrane. This is Multidrug resistance protein MdtA from Klebsiella pneumoniae subsp. pneumoniae (strain ATCC 700721 / MGH 78578).